The sequence spans 327 residues: Sphingomyelinase D (327 aa).

An N-terminal signal peptide occupies residues 1 to 23 (MQPLTRTICALFCLLLTLPLTFG). His-52 is an active-site residue. Mg(2+)-binding residues include Glu-72, Asp-74, and Asp-117. The short motif at 320–327 (VTGADKLW) is the SMD-tail element.

The protein belongs to the sphingomyelinase D/phospholipase D family. It depends on Mg(2+) as a cofactor.

It is found in the secreted. It carries out the reaction a sphingomyelin + H2O = an N-acylsphing-4-enine 1-phosphate + choline + H(+). Functionally, catalyzes the hydrolysis of sphingomyelin. Sphingomyelinases D are produced by some spider in their venoms, but also by arthropods such as ticks, or pathogenic bacteria and fungi. They might play a role in pathogenicity through different mechanisms, such as membrane destabilization and host cell penetration, but also pulmonary inflammation and cutaneous lesions. The protein is Sphingomyelinase D of Paracoccidioides brasiliensis (strain Pb03).